Reading from the N-terminus, the 427-residue chain is 3-phosphoshikimate 1-carboxyvinyltransferase (427 aa).

The 3-phosphoshikimate site is built by Lys23, Ser24, and Arg28. Position 23 (Lys23) interacts with phosphoenolpyruvate. Phosphoenolpyruvate contacts are provided by Gly97 and Arg125. 3-phosphoshikimate is bound by residues Ser170, Ser171, Gln172, Ser198, Asp314, Asn337, and Lys341. Phosphoenolpyruvate is bound at residue Gln172. Residue Asp314 is the Proton acceptor of the active site. Residues Arg345, Arg387, and Lys412 each coordinate phosphoenolpyruvate.

Belongs to the EPSP synthase family. Monomer.

It is found in the cytoplasm. It carries out the reaction 3-phosphoshikimate + phosphoenolpyruvate = 5-O-(1-carboxyvinyl)-3-phosphoshikimate + phosphate. Its pathway is metabolic intermediate biosynthesis; chorismate biosynthesis; chorismate from D-erythrose 4-phosphate and phosphoenolpyruvate: step 6/7. Functionally, catalyzes the transfer of the enolpyruvyl moiety of phosphoenolpyruvate (PEP) to the 5-hydroxyl of shikimate-3-phosphate (S3P) to produce enolpyruvyl shikimate-3-phosphate and inorganic phosphate. The sequence is that of 3-phosphoshikimate 1-carboxyvinyltransferase from Buchnera aphidicola subsp. Baizongia pistaciae (strain Bp).